We begin with the raw amino-acid sequence, 1568 residues long: Kielin/chordin-like protein (1568 aa).

The N-terminal stretch at 1 to 23 (MAGVGAAALSLLLHLGALALAAG) is a signal peptide. Positions 27–49 (GAVPREPPGQQTTAHSSVLAGNS) are disordered. The span at 35-49 (GQQTTAHSSVLAGNS) shows a compositional bias: polar residues. Positions 60–87 (LGRLEAAVMELREQNKDLQTRVRQLESC) form a coiled coil. 16 VWFC domains span residues 136 to 193 (RGCS…PICR), 194 to 253 (PGCD…PTCQ), 253 to 312 (QGCT…PVCD), 312 to 370 (DGCF…PVCD), 426 to 485 (PACE…PSCD), 485 to 544 (DSCT…PRCP), 544 to 602 (PDCI…NDCS), 602 to 661 (SGCA…PQCP), 667 to 725 (AGCP…PSCD), 725 to 782 (DGCL…PDCD), 782 to 841 (DGCE…PTCQ), 900 to 959 (HSCL…PRCR), 959 to 1017 (RGCL…PQCS), 1017 to 1085 (SDCE…PTCA), 1082 to 1145 (PTCA…PVCR), and 1149 to 1209 (QSCV…PRCL). Asparagine 340 is a glycosylation site (N-linked (GlcNAc...) asparagine). Residue asparagine 499 is glycosylated (N-linked (GlcNAc...) asparagine). A glycan (N-linked (GlcNAc...) asparagine) is linked at asparagine 1090. A VWFD domain is found at 1213–1389 (ASCMAFGDPH…EGLWPGRPCS (177 aa)). 2 disulfide bridges follow: cysteine 1215-cysteine 1347 and cysteine 1237-cysteine 1388. Residues 1483–1543 (CPLERGFVFD…EAHCIPPEAC (61 aa)) form the TIL domain.

Interacts with BMP7 and, by doing so, enhances binding to the type I receptors that contains cytoplasmic serine/threonine protein kinase domains. Also able to interact with activin-A and TGFB1.

The protein resides in the secreted. Its function is as follows. Enhances bone morphogenetic protein (BMP) signaling in a paracrine manner. In contrast, it inhibits both the activin-A and TGFB1-mediated signaling pathways. This chain is Kielin/chordin-like protein, found in Homo sapiens (Human).